Here is a 377-residue protein sequence, read N- to C-terminus: RCC1 domain-containing protein 1 (377 aa).

The tract at residues 1–172 (MAEKRHGAWF…VRQLELGAEH (172 aa)) is interaction with KDM8. An RCC1 1 repeat occupies 6–57 (HGAWFGFGFCGFGQALGSGNSHHSVYSPEPLHASDDICQVSAGWSYTALVTR). (3R)-3-hydroxyarginine is present on Arg-144. 3 RCC1 repeats span residues 179-230 (AGQV…CLSE), 232-289 (GDIY…IAIQ), and 319-372 (TGEL…VYAM).

As to quaternary structure, found in a complex with KDM8. Interacts (via N-terminus) with KDM8 (via N-terminus). Post-translationally, specifically hydroxylated (with R stereochemistry) at C-3 of ARG-141 by KDM8.

It is found in the chromosome. Functionally, plays a role in transcriptional repression of satellite repeats, possibly by regulating H3K36 methylation levels in centromeric regions together with KDM8. Possibly together with KDM8, is involved in proper mitotic spindle organization and chromosome segregation. Plays a role in regulating alpha-tubulin deacetylation and cytoskeletal microtubule stability, thereby promoting cell migration and TGF-beta-induced epithelial to mesenchymal transition (EMT), potentially through the inhibition of KDM8. This chain is RCC1 domain-containing protein 1 (Rccd1), found in Mus musculus (Mouse).